A 635-amino-acid polypeptide reads, in one-letter code: Sulfite reductase [ferredoxin], chloroplastic (635 aa).

The transit peptide at 1–50 directs the protein to the chloroplast; the sequence is MSGAIGGAEVHGFRGAAAQLPRSRVLGRPIRVAPPAAARPGGASAGSIRA. Disordered stretches follow at residues 31-50 and 245-267; these read RVAP…SIRA and PEVT…PEPI. Basic and acidic residues predominate over residues 245-254; the sequence is PEVTKARNDN. [4Fe-4S] cluster is bound by residues C494, C500, C540, and C544. C544 contributes to the siroheme binding site.

Belongs to the nitrite and sulfite reductase 4Fe-4S domain family. Monomer. Interacts with ferredoxin. It depends on siroheme as a cofactor. [4Fe-4S] cluster is required as a cofactor. Phosphorylated; this phosphorylation reduces DNA-binding. In terms of tissue distribution, present in roots and leaves (at protein level). In leaves, sulfite reductase activity is detected in both bundle sheath and mesophyll cell types.

It localises to the plastid. The protein localises to the chloroplast stroma. Its subcellular location is the chloroplast nucleoid. It is found in the plastid stroma. It catalyses the reaction hydrogen sulfide + 6 oxidized [2Fe-2S]-[ferredoxin] + 3 H2O = sulfite + 6 reduced [2Fe-2S]-[ferredoxin] + 7 H(+). Its activity is regulated as follows. Inhibited by the tryptophan-modifying reagent, N-bromosuccinimide (NBS), by the lysine-modifying reagent, N-acetylsuccinimide and by the arginine-modifying reagent, phenylglyoxal. Complex formation with ferredoxin prevents these inhibitions. Functionally, essential protein with sulfite reductase activity required in assimilatory sulfate reduction pathway during both primary and secondary metabolism and thus involved in development and growth. Its function is as follows. DNA-binding protein that binds to both double-stranded and single-stranded DNA without significant sequence specificity to reversibly repress the transcriptional activity of chloroplast nucleoids by promoting DNA compaction and possibly regulate DNA replication. The protein is Sulfite reductase [ferredoxin], chloroplastic (SIR) of Zea mays (Maize).